Reading from the N-terminus, the 363-residue chain is tRNA(Met) cytidine acetate ligase (363 aa).

ATP-binding positions include 7-20, Gly96, Asn152, and Arg175; that span reads IAEF…HKYL.

The protein belongs to the TmcAL family.

It localises to the cytoplasm. The enzyme catalyses cytidine(34) in elongator tRNA(Met) + acetate + ATP = N(4)-acetylcytidine(34) in elongator tRNA(Met) + AMP + diphosphate. Functionally, catalyzes the formation of N(4)-acetylcytidine (ac(4)C) at the wobble position of elongator tRNA(Met), using acetate and ATP as substrates. First activates an acetate ion to form acetyladenylate (Ac-AMP) and then transfers the acetyl group to tRNA to form ac(4)C34. The polypeptide is tRNA(Met) cytidine acetate ligase (Streptococcus thermophilus (strain ATCC BAA-491 / LMD-9)).